The primary structure comprises 64 residues: DNA gyrase inhibitor YacG (64 aa).

Zn(2+)-binding residues include C10, C13, C29, and C33.

The protein belongs to the DNA gyrase inhibitor YacG family. As to quaternary structure, interacts with GyrB. The cofactor is Zn(2+).

Its function is as follows. Inhibits all the catalytic activities of DNA gyrase by preventing its interaction with DNA. Acts by binding directly to the C-terminal domain of GyrB, which probably disrupts DNA binding by the gyrase. This chain is DNA gyrase inhibitor YacG, found in Pectobacterium atrosepticum (strain SCRI 1043 / ATCC BAA-672) (Erwinia carotovora subsp. atroseptica).